The sequence spans 162 residues: 2-C-methyl-D-erythritol 2,4-cyclodiphosphate synthase (162 aa).

A divalent metal cation-binding residues include Asp9 and His11. Residues 9 to 11 (DVH) and 35 to 36 (HS) contribute to the 4-CDP-2-C-methyl-D-erythritol 2-phosphate site. Residue His43 coordinates a divalent metal cation. 4-CDP-2-C-methyl-D-erythritol 2-phosphate-binding positions include 57-59 (DIG), 62-66 (FPDTD), 133-136 (TTTE), Phe140, and Arg143.

This sequence belongs to the IspF family. In terms of assembly, homotrimer. The cofactor is a divalent metal cation.

The catalysed reaction is 4-CDP-2-C-methyl-D-erythritol 2-phosphate = 2-C-methyl-D-erythritol 2,4-cyclic diphosphate + CMP. It functions in the pathway isoprenoid biosynthesis; isopentenyl diphosphate biosynthesis via DXP pathway; isopentenyl diphosphate from 1-deoxy-D-xylulose 5-phosphate: step 4/6. Its function is as follows. Involved in the biosynthesis of isopentenyl diphosphate (IPP) and dimethylallyl diphosphate (DMAPP), two major building blocks of isoprenoid compounds. Catalyzes the conversion of 4-diphosphocytidyl-2-C-methyl-D-erythritol 2-phosphate (CDP-ME2P) to 2-C-methyl-D-erythritol 2,4-cyclodiphosphate (ME-CPP) with a corresponding release of cytidine 5-monophosphate (CMP). The sequence is that of 2-C-methyl-D-erythritol 2,4-cyclodiphosphate synthase from Histophilus somni (strain 129Pt) (Haemophilus somnus).